The primary structure comprises 317 residues: Transaldolase (317 aa).

Lysine 126 (schiff-base intermediate with substrate) is an active-site residue.

This sequence belongs to the transaldolase family. Type 1 subfamily. As to quaternary structure, homodimer.

The protein localises to the cytoplasm. It catalyses the reaction D-sedoheptulose 7-phosphate + D-glyceraldehyde 3-phosphate = D-erythrose 4-phosphate + beta-D-fructose 6-phosphate. It functions in the pathway carbohydrate degradation; pentose phosphate pathway; D-glyceraldehyde 3-phosphate and beta-D-fructose 6-phosphate from D-ribose 5-phosphate and D-xylulose 5-phosphate (non-oxidative stage): step 2/3. In terms of biological role, transaldolase is important for the balance of metabolites in the pentose-phosphate pathway. This chain is Transaldolase, found in Burkholderia ambifaria (strain ATCC BAA-244 / DSM 16087 / CCUG 44356 / LMG 19182 / AMMD) (Burkholderia cepacia (strain AMMD)).